We begin with the raw amino-acid sequence, 123 residues long: WAP four-disulfide core domain protein 5 (123 aa).

An N-terminal signal peptide occupies residues 1-24 (MRIQSLLLLGALLAVGSQPPAAFG). 2 WAP domains span residues 27–73 (KGEK…CVPR) and 74–121 (VSVK…RDPA). 8 disulfide bridges follow: C34–C62, C41–C66, C49–C61, C55–C70, C81–C109, C88–C113, C96–C108, and C102–C117.

It is found in the secreted. Functionally, putative acid-stable proteinase inhibitor. The sequence is that of WAP four-disulfide core domain protein 5 (WFDC5) from Saimiri boliviensis boliviensis (Bolivian squirrel monkey).